Reading from the N-terminus, the 345-residue chain is Lysine-specific demethylase JMJ32 (345 aa).

In terms of domain architecture, JmjC spans 122–315 (GYLQQQNDCF…IKYAYFNFLQ (194 aa)). Positions 174, 176, and 281 each coordinate Fe cation.

Belongs to the JARID1 histone demethylase family. Requires Fe(2+) as cofactor. In terms of tissue distribution, expressed ubiquitously including in vasculatures, leaves, siliques, roots and inflorescences. Present in the root meristem. Accumulates in cotyledons and root tips of young seedlings.

It is found in the nucleus. The protein resides in the cytoplasm. It localises to the endoplasmic reticulum. It catalyses the reaction N(6),N(6),N(6)-trimethyl-L-lysyl(27)-[histone H3] + 2-oxoglutarate + O2 = N(6),N(6)-dimethyl-L-lysyl(27)-[histone H3] + formaldehyde + succinate + CO2. The enzyme catalyses N(6),N(6)-dimethyl-L-lysyl(27)-[histone H3] + 2-oxoglutarate + O2 = N(6)-methyl-L-lysyl(27)-[histone H3] + formaldehyde + succinate + CO2. It carries out the reaction N(6),N(6),N(6)-trimethyl-L-lysyl(27)-[histone H3] + 2 2-oxoglutarate + 2 O2 = N(6)-methyl-L-lysyl(27)-[histone H3] + 2 formaldehyde + 2 succinate + 2 CO2. Histone demethylase that demethylates 'Lys-27' (H3K27me) of histone H3 with a specific activity for H3K27me3 and H3K27me2, and involved in the regulation of gene expression. No activity on H3K27me1. Together with JMJ30, regulates the flowering-repressor FLOWERING LOCUS C (FLC) locus by removing the repressive histone modification H3 lysine 27 trimethylation (H3K27me3), especially at elevated temperatures (e.g. 29 degrees Celsius), thus preventing extreme precocious flowering. JMJ30 and JMJ32 are regulators involved in the integration of abscisic acid (ABA) and brassinosteroids (BR) signaling pathways. Together with JMJ30, controls ABA-mediated growth arrest during the post-germination stage in unfavorable conditions, and responses to ABA during root development, via the removal of repressive histone mark (H3K27me3) from the SnRK2.8 promoter, thus promoting SnRK2.8 expression and subsequent kinase-dependent ABI3 activation. In addition, removes the repressive histone marks (H3K27me3) from the BZR1 locus in response to stress and ABA, thus activating the BR signaling pathway which, in turn, inhibits the ABA signaling pathway. In Arabidopsis thaliana (Mouse-ear cress), this protein is Lysine-specific demethylase JMJ32.